A 234-amino-acid chain; its full sequence is Nitroreductase NfnB (234 aa).

Residue 25–29 (RRAVR) coordinates FMN. Positions 55, 105, 113, and 118 each coordinate NADP(+). FMN-binding positions include Tyr137, 181-182 (AL), and Arg223.

Belongs to the nitroreductase family. As to quaternary structure, homodimer. FMN is required as a cofactor.

Its function is as follows. Confers resistance to antitubercular drugs benzothiazinone (BTZ) and dinitrobenzamide (DNB). Inactivates BTZ and DNB by reducing an essential nitro group of these compounds to amino group or to hydroxyl amine, respectively, using NADH or NADPH as source of reducing equivalents; two electrons are transferred. Able to reduce the nitro group of bicyclic nitroimidazole PA-824, but not of quinone menadione, nitrofurazone, methyl-4-nitrobenzoate, 4-nitrobenzene methyl sulfonate or 4-nitroacetophenone. In Mycolicibacterium smegmatis (strain ATCC 700084 / mc(2)155) (Mycobacterium smegmatis), this protein is Nitroreductase NfnB.